A 507-amino-acid polypeptide reads, in one-letter code: Glucose-6-phosphate 1-dehydrogenase (507 aa).

2 residues coordinate NADP(+): Arg57 and Lys168. 4 residues coordinate substrate: His198, Lys202, Glu236, and Asp255. His260 acts as the Proton acceptor in catalysis. Substrate is bound at residue Lys356.

Belongs to the glucose-6-phosphate dehydrogenase family.

It carries out the reaction D-glucose 6-phosphate + NADP(+) = 6-phospho-D-glucono-1,5-lactone + NADPH + H(+). Its pathway is carbohydrate degradation; pentose phosphate pathway; D-ribulose 5-phosphate from D-glucose 6-phosphate (oxidative stage): step 1/3. In terms of biological role, catalyzes the oxidation of glucose 6-phosphate to 6-phosphogluconolactone. The sequence is that of Glucose-6-phosphate 1-dehydrogenase from Chlamydia muridarum (strain MoPn / Nigg).